The primary structure comprises 405 residues: S-adenosylmethionine synthase (405 aa).

139-144 (GKGSAD) is an ATP binding site.

It belongs to the AdoMet synthase 2 family. Mg(2+) is required as a cofactor.

The enzyme catalyses L-methionine + ATP + H2O = S-adenosyl-L-methionine + phosphate + diphosphate. The protein operates within amino-acid biosynthesis; S-adenosyl-L-methionine biosynthesis; S-adenosyl-L-methionine from L-methionine: step 1/1. Catalyzes the formation of S-adenosylmethionine from methionine and ATP. In Sulfurisphaera tokodaii (strain DSM 16993 / JCM 10545 / NBRC 100140 / 7) (Sulfolobus tokodaii), this protein is S-adenosylmethionine synthase.